A 360-amino-acid polypeptide reads, in one-letter code: Cyclin-D1-binding protein 1 (360 aa).

Residue Ala-2 is modified to N-acetylalanine. 2 interaction with TCF3 regions span residues 2-184 (ASAT…VDFV) and 150-360 (ISYN…ELEL). Interaction with RPLP0 stretches follow at residues 2–190 (ASAT…AHEE) and 240–360 (LIIP…ELEL). Residues 2–208 (ASATAPAAAV…DPYSGLLNDT (207 aa)) are required for interaction with CCND1.

The protein belongs to the CCNDBP1 family. In terms of assembly, interacts with CCND1 and GRAP2. May also interact with COPS5, RPLP0, SIRT6, SYF2 and TCF3. Phosphorylated. As to expression, ubiquitously expressed. Expression is down-regulated in a variety of tumor types including breast, colon, prostate and rectal tumors, and is up-regulated in certain hepatic carcinomas.

The protein resides in the cytoplasm. The protein localises to the nucleus. In terms of biological role, may negatively regulate cell cycle progression. May act at least in part via inhibition of the cyclin-D1/CDK4 complex, thereby preventing phosphorylation of RB1 and blocking E2F-dependent transcription. In Homo sapiens (Human), this protein is Cyclin-D1-binding protein 1 (CCNDBP1).